The sequence spans 598 residues: Nitrate/nitrite sensor protein NarX (598 aa).

Residues 1–14 lie on the Cytoplasmic side of the membrane; it reads MLKRCLSPLTLVNQ. The chain crosses the membrane as a helical span at residues 15–37; sequence VALIVLLSTAIGLAGMAVSGWLV. The Periplasmic portion of the chain corresponds to 38 to 151; the sequence is QGVQGSAHAI…DRTTEMRIET (114 aa). The chain crosses the membrane as a helical span at residues 152-174; the sequence is VVLVHRVMAVFMALLLVFTIIWL. Over 175–598 the chain is Cytoplasmic; sequence RARLLQPWRQ…FTDVQGDTHE (424 aa). An HAMP domain is found at 176–228; it reads ARLLQPWRQLLAMASAVSHRDFTQRANISGRNEMAMLGTALNNMSAELAESYA. Residues 393-587 enclose the Histidine kinase domain; that stretch reads TIARELHDSI…EVVVTFIPEK (195 aa). His399 is modified (phosphohistidine; by autocatalysis).

The protein resides in the cell inner membrane. It carries out the reaction ATP + protein L-histidine = ADP + protein N-phospho-L-histidine.. Acts as a sensor for nitrate/nitrite and transduces signal of nitrate availability to the NarL protein and of both nitrate/nitrite to the NarP protein. NarX probably activates NarL and NarP by phosphorylation in the presence of nitrate. NarX also plays a negative role in controlling NarL activity, probably through dephosphorylation in the absence of nitrate. The chain is Nitrate/nitrite sensor protein NarX (narX) from Escherichia coli O157:H7.